The chain runs to 457 residues: Serine--tRNA ligase (457 aa).

L-serine is bound at residue 252–254 (TAE). ATP-binding positions include 283–285 (RKE) and valine 299. Glutamate 306 is a binding site for L-serine. 370 to 373 (EMVS) serves as a coordination point for ATP. Residue threonine 406 participates in L-serine binding.

The protein belongs to the class-II aminoacyl-tRNA synthetase family. Type-1 seryl-tRNA synthetase subfamily. Homodimer. The tRNA molecule binds across the dimer.

It is found in the cytoplasm. It catalyses the reaction tRNA(Ser) + L-serine + ATP = L-seryl-tRNA(Ser) + AMP + diphosphate + H(+). It carries out the reaction tRNA(Sec) + L-serine + ATP = L-seryl-tRNA(Sec) + AMP + diphosphate + H(+). Its pathway is aminoacyl-tRNA biosynthesis; selenocysteinyl-tRNA(Sec) biosynthesis; L-seryl-tRNA(Sec) from L-serine and tRNA(Sec): step 1/1. Functionally, catalyzes the attachment of serine to tRNA(Ser). Is also able to aminoacylate tRNA(Sec) with serine, to form the misacylated tRNA L-seryl-tRNA(Sec), which will be further converted into selenocysteinyl-tRNA(Sec). The protein is Serine--tRNA ligase of Saccharolobus islandicus (strain Y.G.57.14 / Yellowstone #1) (Sulfolobus islandicus).